The chain runs to 611 residues: Calmegin (611 aa).

An N-terminal signal peptide occupies residues 1 to 19 (MRFQGVGLCLGLLFITVNA). Over 20 to 471 (DFMDDGVEVE…LVIAAEERPW (452 aa)) the chain is Lumenal. Lysine 128 carries the N6-acetyllysine modification. A disulfide bridge connects residues cysteine 151 and cysteine 185. The tract at residues 254–335 (LDDVVPPINP…KAEKPEDWSD (82 aa)) is disordered. The segment covering 265–284 (REIDDPSDKKPEEWDDRAKI) has biased composition (basic and acidic residues). A run of 8 repeats spans residues 267 to 280 (IDDP…EWDD), 284 to 297 (IPDP…DWDE), 303 to 316 (IEDS…GWLD), 322 to 335 (IPNP…DWSD), 339 to 352 (GEWE…PACQ), 356 to 369 (GEWK…PKYK), 370 to 383 (GIWR…PNYQ), and 384 to 397 (GLWS…PDYF). The interval 317–350 (DEPKFIPNPKAEKPEDWSDDMDGEWEAPHIPNPA) is interaction with PPIB. A disulfide bridge connects residues cysteine 351 and cysteine 355. The helical transmembrane segment at 472–492 (LWLMYLVMAGLPVALVASFCW) threads the bilayer. Over 493 to 611 (PRKVKKKYED…SLRKRRVRKD (119 aa)) the chain is Cytoplasmic. Residues 517–611 (AALEQEAEEE…SLRKRRVRKD (95 aa)) form a disordered region. Basic and acidic residues predominate over residues 526–584 (EKAPEKPEDVQEEKKPGEAEVVTVEKEVIGEPEEKSKEDRETLEGQEEVSKLSKSGSED). Phosphoserine is present on residues serine 561, serine 578, serine 580, serine 582, serine 592, serine 595, and serine 602. Residues 602 to 611 (SLRKRRVRKD) show a composition bias toward basic residues.

This sequence belongs to the calreticulin family. In terms of assembly, interacts with PDILT and PPIB. Interacts with ADAM2. Interacts with ADAM1A, ADAM1B and ADAM3; these are protein-coding genes in mouse but may be pseudogenes in other organisms. In terms of tissue distribution, detected in testis (at protein level). Detected in testis.

It localises to the endoplasmic reticulum membrane. In terms of biological role, functions during spermatogenesis as a chaperone for a range of client proteins that are important for sperm adhesion onto the egg zona pellucida and for subsequent penetration of the zona pellucida. Required for normal sperm migration from the uterus into the oviduct. Required for normal male fertility. Binds calcium ions. This is Calmegin (Clgn) from Mus musculus (Mouse).